Here is a 144-residue protein sequence, read N- to C-terminus: Superoxide dismutase [Mn], mitochondrial (144 aa).

Residues histidine 10, histidine 58, and aspartate 143 each coordinate Mn(2+).

It belongs to the iron/manganese superoxide dismutase family. In terms of assembly, homotetramer. The cofactor is Mn(2+).

The protein localises to the mitochondrion matrix. It carries out the reaction 2 superoxide + 2 H(+) = H2O2 + O2. In terms of biological role, destroys superoxide anion radicals which are normally produced within the cells and which are toxic to biological systems. The sequence is that of Superoxide dismutase [Mn], mitochondrial from Palinurus vulgaris (European spiny lobster).